Here is a 545-residue protein sequence, read N- to C-terminus: T-complex protein 1 subunit gamma (545 aa).

Met-1 bears the N-acetylmethionine mark. The segment at 1–24 (MMGHRPVLVLSQNTKRESGRKVQS) is disordered. At Ser-11 the chain carries Phosphoserine. Lys-15 participates in a covalent cross-link: Glycyl lysine isopeptide (Lys-Gly) (interchain with G-Cter in SUMO2). ADP is bound by residues Gly-42, Gly-94, Thr-95, Thr-96, Ser-97, Thr-162, and Lys-163. Positions 42, 94, 95, and 96 each coordinate ATP. Phosphoserine is present on Ser-170. At Lys-222 the chain carries N6-acetyllysine. 2 positions are modified to phosphoserine: Ser-243 and Ser-244. Tyr-247 is modified (phosphotyrosine). Residues Lys-248 and Lys-249 each participate in a glycyl lysine isopeptide (Lys-Gly) (interchain with G-Cter in SUMO2) cross-link. Ser-252 carries the phosphoserine modification. A disulfide bridge links Cys-366 with Cys-372. A Glycyl lysine isopeptide (Lys-Gly) (interchain with G-Cter in SUMO2) cross-link involves residue Lys-381. Gly-411 contacts ADP. Residue Gly-411 coordinates ATP. Phosphothreonine occurs at positions 430 and 459. Gly-482, Glu-483, Glu-497, and Lys-502 together coordinate ADP. Gly-482 contributes to the ATP binding site. Glu-497 is a binding site for ATP. Residues 526–545 (HKKKGDDQSRQGGAPDAGQE) form a disordered region.

The protein belongs to the TCP-1 chaperonin family. As to quaternary structure, component of the chaperonin-containing T-complex (TRiC), a hexadecamer composed of two identical back-to-back stacked rings enclosing a protein folding chamber. Each ring is made up of eight different subunits: TCP1/CCT1, CCT2, CCT3, CCT4, CCT5, CCT6A/CCT6, CCT7, CCT8. Interacts with PACRG. Interacts with DNAAF4. Interacts with DLEC1.

The protein resides in the cytoplasm. It carries out the reaction ATP + H2O = ADP + phosphate + H(+). Component of the chaperonin-containing T-complex (TRiC), a molecular chaperone complex that assists the folding of actin, tubulin and other proteins upon ATP hydrolysis. The TRiC complex mediates the folding of WRAP53/TCAB1, thereby regulating telomere maintenance. As part of the TRiC complex may play a role in the assembly of BBSome, a complex involved in ciliogenesis regulating transports vesicles to the cilia. This Macaca fascicularis (Crab-eating macaque) protein is T-complex protein 1 subunit gamma (CCT3).